We begin with the raw amino-acid sequence, 498 residues long: MKINPTTSVPGVSTLEKENLGRISQIIGPVLDVAFPPGKMPNIYNALVVKGQDTAGQQINVTCEVQQLLGNNRVRAVAMSATDGLTRGMEVIDTGTALSVPVGGATLGRIFNVLGEPVDNLGPVDTRTTSPIHKSAPAFIQLDTKLSIFETGIKVVDLLAPYRRGGKIGLFGGAGVGKTVLIMELINNIAKAHGGVSVFGGVGERTREGNDLYMEMKESGVINEQNLAESKVALVYGQMNEPPGARMRVGLTALTMAEYFRDVNEQDVLLFIDNIFRFVQAGSEVSALLGRMPSAVGYQPTLSTEMGTLQERITSTKEGSITSIQAVYVPADDLTDPAPATTFAHLDATTVLSRGLAAKGIYPAVDPLDSTSTMLQPRIVGEEHYETAQRVKQTLQRYNELQDIIAILGLDELSEEDRLTVARARKIERFLSQPFFVAEVFTGSPGKYVGLAETIRGFKLILSGELDGLPEQAFYLVGNIDEATAKATNLEMESKLKK.

Residue 172 to 179 (GGAGVGKT) participates in ATP binding.

It belongs to the ATPase alpha/beta chains family. As to quaternary structure, F-type ATPases have 2 components, CF(1) - the catalytic core - and CF(0) - the membrane proton channel. CF(1) has five subunits: alpha(3), beta(3), gamma(1), delta(1), epsilon(1). CF(0) has four main subunits: a(1), b(1), b'(1) and c(9-12).

The protein resides in the plastid. It localises to the chloroplast thylakoid membrane. It catalyses the reaction ATP + H2O + 4 H(+)(in) = ADP + phosphate + 5 H(+)(out). Produces ATP from ADP in the presence of a proton gradient across the membrane. The catalytic sites are hosted primarily by the beta subunits. The protein is ATP synthase subunit beta, chloroplastic of Gossypium barbadense (Sea Island cotton).